The following is a 66-amino-acid chain: Large ribosomal subunit protein uL29 (66 aa).

It belongs to the universal ribosomal protein uL29 family.

The polypeptide is Large ribosomal subunit protein uL29 (Thermococcus sibiricus (strain DSM 12597 / MM 739)).